The primary structure comprises 199 residues: ATP synthase subunit b (199 aa).

A helical transmembrane segment spans residues serine 5–alanine 25.

This sequence belongs to the ATPase B chain family. As to quaternary structure, F-type ATPases have 2 components, F(1) - the catalytic core - and F(0) - the membrane proton channel. F(1) has five subunits: alpha(3), beta(3), gamma(1), delta(1), epsilon(1). F(0) has three main subunits: a(1), b(2) and c(10-14). The alpha and beta chains form an alternating ring which encloses part of the gamma chain. F(1) is attached to F(0) by a central stalk formed by the gamma and epsilon chains, while a peripheral stalk is formed by the delta and b chains.

The protein resides in the cell inner membrane. Functionally, f(1)F(0) ATP synthase produces ATP from ADP in the presence of a proton or sodium gradient. F-type ATPases consist of two structural domains, F(1) containing the extramembraneous catalytic core and F(0) containing the membrane proton channel, linked together by a central stalk and a peripheral stalk. During catalysis, ATP synthesis in the catalytic domain of F(1) is coupled via a rotary mechanism of the central stalk subunits to proton translocation. Component of the F(0) channel, it forms part of the peripheral stalk, linking F(1) to F(0). This chain is ATP synthase subunit b, found in Citrifermentans bemidjiense (strain ATCC BAA-1014 / DSM 16622 / JCM 12645 / Bem) (Geobacter bemidjiensis).